Consider the following 277-residue polypeptide: Protein CIMAP1D (277 aa).

3 STPGR repeats span residues 122–148 (PGPG…LGSR), 202–227 (PGPG…ILGR), and 238–263 (PGPG…MGIR). Residues 181–277 (PSYTVVGRTP…ASTMVGDTKC (97 aa)) are disordered.

It belongs to the CIMAP family.

The sequence is that of Protein CIMAP1D (Cimap1d) from Mus musculus (Mouse).